Here is a 164-residue protein sequence, read N- to C-terminus: MASFSGDETAPFFGFLGAAAALVFSCMGAAYGTAKSGVGVASMGVMRPELVMKSIVPVVMAGVLGIYGLIIAVIISTGINPKAKSYYLFDGYAHLSSGLACGLAGLSAGMAIGIVGDAGVRANAQQPKLFVGMILILIFAEALALYGLIVGIILSSRAGQSRAD.

Residues methionine 1–threonine 9 lie on the Lumenal side of the membrane. A helical transmembrane segment spans residues alanine 10 to glycine 32. The Cytoplasmic segment spans residues threonine 33–serine 54. Residues isoleucine 55–isoleucine 75 traverse the membrane as a helical segment. Residues serine 76–histidine 94 lie on the Lumenal side of the membrane. The chain crosses the membrane as a helical span at residues leucine 95–glycine 116. Residues aspartate 117–lysine 128 are Cytoplasmic-facing. Residues leucine 129–leucine 154 traverse the membrane as a helical segment. Residues serine 155–aspartate 164 lie on the Lumenal side of the membrane.

Belongs to the V-ATPase proteolipid subunit family. V-ATPase is a heteromultimeric enzyme composed of a peripheral catalytic V1 complex (main components: subunits A, B, C, D, E, and F) attached to an integral membrane V0 proton pore complex (main component: the proteolipid protein; which is present as a hexamer that forms the proton-conducting pore).

The protein resides in the vacuole membrane. In terms of biological role, proton-conducting pore forming subunit of the membrane integral V0 complex of vacuolar ATPase. V-ATPase is responsible for acidifying a variety of intracellular compartments in eukaryotic cells. This is V-type proton ATPase 16 kDa proteolipid subunit from Vigna radiata var. radiata (Mung bean).